The primary structure comprises 515 residues: 4-hydroxybenzoate brominase (decarboxylating) (515 aa).

FAD-binding residues include Ser-13, Glu-32, Val-40, Phe-41, His-51, Val-102, and Gln-364.

Belongs to the FMO family. Requires FAD as cofactor.

It carries out the reaction 2 bromide + 4-hydroxybenzoate + 2 NADPH + 2 O2 + 5 H(+) = 2,4-dibromophenol + CO2 + 2 NADP(+) + 4 H2O. The catalysed reaction is bromide + 4-hydroxybenzoate + NADPH + O2 + 2 H(+) = 3-bromo-4-hydroxybenzoate + NADP(+) + 2 H2O. It catalyses the reaction 3-bromo-4-hydroxybenzoate + bromide + NADPH + O2 + 3 H(+) = 2,4-dibromophenol + CO2 + NADP(+) + 2 H2O. The enzyme catalyses 3,4-dihydroxybenzoate + 2 bromide + 2 NADPH + 2 O2 + 5 H(+) = 3,5-dibromobenzene-1,2-diol + CO2 + 2 NADP(+) + 4 H2O. It carries out the reaction 3,4-dihydroxybenzoate + bromide + NADPH + O2 + 2 H(+) = 3-bromo-4,5-dihydroxybenzoate + NADP(+) + 2 H2O. The catalysed reaction is 3-bromo-4,5-dihydroxybenzoate + bromide + NADPH + O2 + 3 H(+) = 3,5-dibromobenzene-1,2-diol + CO2 + NADP(+) + 2 H2O. Its activity is regulated as follows. Activity is abolished in the absence of either bromide or NADPH, while a partial reduction in activity is observed upon omission of FAD. Activity does not require the addition of a flavin reductase to regenerate FADH(2) in situ. Brominase involved in the biosynthesis of polybrominated aromatic organic compounds. Catalyzes the bromination of 4-hydroxybenzoate (4-HBA) to 3-bromo-4-hydroxybenzoate, followed by bromination and decarboxylation of 3-bromo-4-hydroxybenzoate to 2,4-dibromophenol. Can also use 3,4-dihydroxybenzoate, with lower efficiency, forming 3-bromo-4,5-dihydroxybenzoate and 3,5-dibromobenzene-1,2-diol. Can utilize iodide in vivo leading to the formation of iodophenols, but cannot use chloride. This Pseudoalteromonas luteoviolacea (strain 2ta16) protein is 4-hydroxybenzoate brominase (decarboxylating).